The primary structure comprises 62 residues: Cytotoxin 7 (62 aa).

The first 2 residues, 1–2 (YT), serve as a signal peptide directing secretion. Intrachain disulfides connect Cys-5-Cys-23, Cys-16-Cys-40, Cys-44-Cys-55, and Cys-56-Cys-61.

The protein belongs to the three-finger toxin family. Short-chain subfamily. Type IA cytotoxin sub-subfamily. As to quaternary structure, monomer in solution; Homodimer and oligomer in the presence of negatively charged lipids forming a pore with a size ranging between 20 and 30 Angstroms. Expressed by the venom gland.

Its subcellular location is the secreted. The protein localises to the target cell membrane. In terms of biological role, shows cytolytic activity on many different cells by forming pore in lipid membranes. In vivo, increases heart rate or kills the animal by cardiac arrest. In addition, it binds to heparin with high affinity, interacts with Kv channel-interacting protein 1 (KCNIP1) in a calcium-independent manner, and binds to integrin alpha-V/beta-3 (ITGAV/ITGB3) with moderate affinity. This chain is Cytotoxin 7, found in Naja sputatrix (Malayan spitting cobra).